A 43-amino-acid polypeptide reads, in one-letter code: Cytochrome b559 subunit beta (43 aa).

Residues 18-34 (WLAVHTLAIPTVFFLGA) form a helical membrane-spanning segment. Histidine 22 is a heme binding site.

It belongs to the PsbE/PsbF family. In terms of assembly, heterodimer of an alpha subunit and a beta subunit. PSII is composed of 1 copy each of membrane proteins PsbA, PsbB, PsbC, PsbD, PsbE, PsbF, PsbH, PsbI, PsbJ, PsbK, PsbL, PsbM, PsbT, PsbX, PsbY, PsbZ, Psb30/Ycf12, peripheral proteins PsbO, CyanoQ (PsbQ), PsbU, PsbV and a large number of cofactors. It forms dimeric complexes. Heme b is required as a cofactor.

The protein localises to the cellular thylakoid membrane. Its function is as follows. This b-type cytochrome is tightly associated with the reaction center of photosystem II (PSII). PSII is a light-driven water:plastoquinone oxidoreductase that uses light energy to abstract electrons from H(2)O, generating O(2) and a proton gradient subsequently used for ATP formation. It consists of a core antenna complex that captures photons, and an electron transfer chain that converts photonic excitation into a charge separation. This is Cytochrome b559 subunit beta from Synechococcus sp. (strain JA-2-3B'a(2-13)) (Cyanobacteria bacterium Yellowstone B-Prime).